The primary structure comprises 458 residues: Phosphoglucosamine mutase (458 aa).

The Phosphoserine intermediate role is filled by serine 102. The Mg(2+) site is built by serine 102, aspartate 252, aspartate 254, and aspartate 256. At serine 102 the chain carries Phosphoserine.

It belongs to the phosphohexose mutase family. Requires Mg(2+) as cofactor. In terms of processing, activated by phosphorylation.

It catalyses the reaction alpha-D-glucosamine 1-phosphate = D-glucosamine 6-phosphate. Its function is as follows. Catalyzes the conversion of glucosamine-6-phosphate to glucosamine-1-phosphate. The polypeptide is Phosphoglucosamine mutase (Anaeromyxobacter dehalogenans (strain 2CP-C)).